A 361-amino-acid chain; its full sequence is UDP-3-O-acylglucosamine N-acyltransferase (361 aa).

Residue His-253 is the Proton acceptor of the active site.

It belongs to the transferase hexapeptide repeat family. LpxD subfamily. As to quaternary structure, homotrimer.

The enzyme catalyses a UDP-3-O-[(3R)-3-hydroxyacyl]-alpha-D-glucosamine + a (3R)-hydroxyacyl-[ACP] = a UDP-2-N,3-O-bis[(3R)-3-hydroxyacyl]-alpha-D-glucosamine + holo-[ACP] + H(+). Its pathway is bacterial outer membrane biogenesis; LPS lipid A biosynthesis. Functionally, catalyzes the N-acylation of UDP-3-O-acylglucosamine using 3-hydroxyacyl-ACP as the acyl donor. Is involved in the biosynthesis of lipid A, a phosphorylated glycolipid that anchors the lipopolysaccharide to the outer membrane of the cell. The polypeptide is UDP-3-O-acylglucosamine N-acyltransferase (Burkholderia pseudomallei (strain 1710b)).